A 412-amino-acid chain; its full sequence is Putative competence-damage inducible protein (412 aa).

It belongs to the CinA family.

This Bacillus cereus (strain AH820) protein is Putative competence-damage inducible protein.